Here is an 860-residue protein sequence, read N- to C-terminus: LPS-assembly protein LptD (860 aa).

An N-terminal signal peptide occupies residues 1–21 (MTKRYFSLLAVCSAIATSTFA).

It belongs to the LptD family. Component of the lipopolysaccharide transport and assembly complex. Interacts with LptE and LptA.

Its subcellular location is the cell outer membrane. Its function is as follows. Together with LptE, is involved in the assembly of lipopolysaccharide (LPS) at the surface of the outer membrane. The protein is LPS-assembly protein LptD of Saccharophagus degradans (strain 2-40 / ATCC 43961 / DSM 17024).